Reading from the N-terminus, the 228-residue chain is 6-carboxyhexanoate--CoA ligase (228 aa).

The protein belongs to the BioW family. As to quaternary structure, homodimer. Mg(2+) is required as a cofactor.

It catalyses the reaction heptanedioate + ATP + CoA = 6-carboxyhexanoyl-CoA + AMP + diphosphate. It functions in the pathway metabolic intermediate metabolism; pimeloyl-CoA biosynthesis; pimeloyl-CoA from pimelate: step 1/1. Its function is as follows. Catalyzes the transformation of pimelate into pimeloyl-CoA with concomitant hydrolysis of ATP to AMP. This chain is 6-carboxyhexanoate--CoA ligase, found in Staphylococcus epidermidis (strain ATCC 35984 / DSM 28319 / BCRC 17069 / CCUG 31568 / BM 3577 / RP62A).